We begin with the raw amino-acid sequence, 412 residues long: Tyrosine--tRNA ligase (412 aa).

Position 31 (Y31) interacts with L-tyrosine. The 'HIGH' region signature appears at 36 to 45 (PTAPSLHIGH). Residues Y162 and Q166 each contribute to the L-tyrosine site. A 'KMSKS' region motif is present at residues 222-226 (KIGKT). K225 provides a ligand contact to ATP. An S4 RNA-binding domain is found at 345 to 412 (KRWLDVVVQL…KKKKQVIDLN (68 aa)).

Belongs to the class-I aminoacyl-tRNA synthetase family. TyrS type 1 subfamily. As to quaternary structure, homodimer.

The protein localises to the cytoplasm. The catalysed reaction is tRNA(Tyr) + L-tyrosine + ATP = L-tyrosyl-tRNA(Tyr) + AMP + diphosphate + H(+). Catalyzes the attachment of tyrosine to tRNA(Tyr) in a two-step reaction: tyrosine is first activated by ATP to form Tyr-AMP and then transferred to the acceptor end of tRNA(Tyr). The chain is Tyrosine--tRNA ligase from Chlamydia muridarum (strain MoPn / Nigg).